Here is a 250-residue protein sequence, read N- to C-terminus: 3-deoxy-manno-octulosonate cytidylyltransferase 1 (250 aa).

The protein belongs to the KdsB family.

It is found in the cytoplasm. It catalyses the reaction 3-deoxy-alpha-D-manno-oct-2-ulosonate + CTP = CMP-3-deoxy-beta-D-manno-octulosonate + diphosphate. It participates in nucleotide-sugar biosynthesis; CMP-3-deoxy-D-manno-octulosonate biosynthesis; CMP-3-deoxy-D-manno-octulosonate from 3-deoxy-D-manno-octulosonate and CTP: step 1/1. The protein operates within bacterial outer membrane biogenesis; lipopolysaccharide biosynthesis. Activates KDO (a required 8-carbon sugar) for incorporation into bacterial lipopolysaccharide in Gram-negative bacteria. This chain is 3-deoxy-manno-octulosonate cytidylyltransferase 1, found in Actinobacillus pleuropneumoniae serotype 5b (strain L20).